The sequence spans 378 residues: Packaging protein 3 (378 aa).

2 disordered regions span residues 1 to 73 (MHPV…EGPV) and 355 to 378 (SRPPQGESFADEGPSESDDEDDFI). The tract at residues 1-178 (MHPVLQSVRN…AFGEELRNTC (178 aa)) is interaction with packaging protein 1. 2 stretches are compositionally biased toward low complexity: residues 16-35 (GGPHQQQPQQQQHGVSSVRR) and 49-58 (PGAGATPTAG). Ser362 is modified (phosphoserine; by host). Positions 363 to 378 (FADEGPSESDDEDDFI) are enriched in acidic residues.

Belongs to the adenoviridae packaging protein 3 family. Part of the genome packaging complex composed of packaging proteins 1, 2 and 3; this complex specifically binds to the packaging sequence on the left end of viral genomic DNA and performs packaging of the viral genome. Interacts with hexon-linking protein IIIa; this interaction is required to promote correct genome packaging. Post-translationally, cleaved at different sites by the viral protease during virion maturation.

The protein localises to the host nucleus. Its function is as follows. Involved in viral genome packaging through its interaction with packaging proteins 1 and 2. After proteolytic cleavage by adenovirus protease, L1 52/55k protein is removed from the capsid during viral maturation. This is Packaging protein 3 from Galliformes (FAdV-1).